A 528-amino-acid chain; its full sequence is (R)-citramalate synthase (528 aa).

A Pyruvate carboxyltransferase domain is found at 5 to 271 (VYIYDTTLRD…IPQENLKKLT (267 aa)).

The protein belongs to the alpha-IPM synthase/homocitrate synthase family.

It carries out the reaction pyruvate + acetyl-CoA + H2O = (3R)-citramalate + CoA + H(+). It participates in amino-acid biosynthesis; L-isoleucine biosynthesis; 2-oxobutanoate from pyruvate: step 1/3. Functionally, catalyzes the condensation of pyruvate and acetyl-coenzyme A to form (R)-citramalate. The chain is (R)-citramalate synthase from Aquifex aeolicus (strain VF5).